Consider the following 130-residue polypeptide: Small ribosomal subunit protein uS9 (130 aa).

Belongs to the universal ribosomal protein uS9 family.

The chain is Small ribosomal subunit protein uS9 from Histophilus somni (strain 129Pt) (Haemophilus somnus).